Reading from the N-terminus, the 382-residue chain is MSAWVLPDHIADVLPSEARHIEELRRSLLDTARCYGYELVMPPLLEHLESLLTGAGAALDLQTFKLVDQLSGRMMGLRADSTPQVARIDAHLLNRPGVTRLCYCGPVLHTRPGAPHASREPLQFGAEIYGHAGLEADLEILMLALDCLKVVKVASPSVDLADARIVHALLKGVPVEIALAEQIYAALAAKDASELAVLTKKFPSSSRQGLLALVQLYGDEKVLLEAEKALQPLPAITESLSNLKWLASQLDGAKVSFDLADLRGYAYYTGTRFSIYAAGASDALVRGGRYDEVGAVFGRNRPAAGFSLDVKALVGVLPARPLRAAIRAPWREAADLRVAIASLRAQGETVVCVLPGHESEVDEFRCDRELVPRNGQWIVASI.

The protein belongs to the class-II aminoacyl-tRNA synthetase family. HisZ subfamily. As to quaternary structure, heteromultimer composed of HisG and HisZ subunits.

It is found in the cytoplasm. It participates in amino-acid biosynthesis; L-histidine biosynthesis; L-histidine from 5-phospho-alpha-D-ribose 1-diphosphate: step 1/9. In terms of biological role, required for the first step of histidine biosynthesis. May allow the feedback regulation of ATP phosphoribosyltransferase activity by histidine. The sequence is that of ATP phosphoribosyltransferase regulatory subunit from Albidiferax ferrireducens (strain ATCC BAA-621 / DSM 15236 / T118) (Rhodoferax ferrireducens).